A 169-amino-acid chain; its full sequence is NAD(P)H-quinone oxidoreductase subunit J, chloroplastic (169 aa).

The protein belongs to the complex I 30 kDa subunit family. NDH is composed of at least 16 different subunits, 5 of which are encoded in the nucleus.

The protein resides in the plastid. Its subcellular location is the chloroplast thylakoid membrane. The catalysed reaction is a plastoquinone + NADH + (n+1) H(+)(in) = a plastoquinol + NAD(+) + n H(+)(out). It carries out the reaction a plastoquinone + NADPH + (n+1) H(+)(in) = a plastoquinol + NADP(+) + n H(+)(out). NDH shuttles electrons from NAD(P)H:plastoquinone, via FMN and iron-sulfur (Fe-S) centers, to quinones in the photosynthetic chain and possibly in a chloroplast respiratory chain. The immediate electron acceptor for the enzyme in this species is believed to be plastoquinone. Couples the redox reaction to proton translocation, and thus conserves the redox energy in a proton gradient. In Staurastrum punctulatum (Green alga), this protein is NAD(P)H-quinone oxidoreductase subunit J, chloroplastic.